We begin with the raw amino-acid sequence, 99 residues long: Integration host factor subunit alpha (99 aa).

The interval 51-71 (NFDLRDKNQRPGRNPKTGEDI) is disordered.

Belongs to the bacterial histone-like protein family. Heterodimer of an alpha and a beta chain.

In terms of biological role, this protein is one of the two subunits of integration host factor, a specific DNA-binding protein that functions in genetic recombination as well as in transcriptional and translational control. The polypeptide is Integration host factor subunit alpha (ihfA) (Dickeya dadantii (strain 3937) (Erwinia chrysanthemi (strain 3937))).